The sequence spans 269 residues: Achromobactin transport ATP-binding protein CbrD (269 aa).

One can recognise an ABC transporter domain in the interval 4-240; the sequence is ITSRELTLGY…ALVKTVFNLD (237 aa). 36–43 contacts ATP; sequence GSNGCGKS.

It belongs to the ABC transporter superfamily.

Its subcellular location is the cell inner membrane. Part of the binding-protein-dependent transport system CbrABCD for uptake of the siderophore achromobactin. Probably responsible for energy coupling to the transport system. The chain is Achromobactin transport ATP-binding protein CbrD (cbrD) from Dickeya dadantii (strain 3937) (Erwinia chrysanthemi (strain 3937)).